We begin with the raw amino-acid sequence, 56 residues long: uncharacterized protein (56 aa).

4Fe-4S ferredoxin-type domains follow at residues 2 to 28 (VKID…NLIE) and 29 to 56 (HIIV…LEGE). The [4Fe-4S] cluster site is built by Cys9, Cys12, Cys15, Cys19, Cys38, Cys41, Cys44, and Cys48.

[4Fe-4S] cluster is required as a cofactor.

Its function is as follows. Ferredoxins are iron-sulfur proteins that transfer electrons in a wide variety of metabolic reactions. This is an uncharacterized protein from Methanocaldococcus jannaschii (strain ATCC 43067 / DSM 2661 / JAL-1 / JCM 10045 / NBRC 100440) (Methanococcus jannaschii).